Here is a 233-residue protein sequence, read N- to C-terminus: Protein YIPF6 (233 aa).

The Cytoplasmic portion of the chain corresponds to 1–84 (MAETEGFGDS…PKKSTTLLRD (84 aa)). The helical transmembrane segment at 85–105 (WDLWGPLVLCVSLALMLQGGN) threads the bilayer. Topologically, residues 106–111 (ADSKDD) are lumenal. The helical transmembrane segment at 112–132 (GGPQFAEVFVIIWFGAVVITL) threads the bilayer. Over 133 to 142 (NSKLLGGTIS) the chain is Cytoplasmic. Residues 143 to 163 (FFQSLCVLGYCILPLTVAMLV) form a helical membrane-spanning segment. Residues 164–180 (CRLVLLLSHTTASFIVR) lie on the Lumenal side of the membrane. The chain crosses the membrane as a helical span at residues 181 to 201 (LVVVTVMFAWSTFASTAFLAD). At 202-208 (SQPPNRR) the chain is on the cytoplasmic side. A helical membrane pass occupies residues 209–229 (ALAVYPIFLFYFVISWMVLTF). Residues 230–233 (NTVS) lie on the Lumenal side of the membrane.

This sequence belongs to the YIP1 family.

It localises to the golgi apparatus membrane. This chain is Protein YIPF6 (yipf6), found in Xenopus tropicalis (Western clawed frog).